The chain runs to 467 residues: Involucrin (467 aa).

The interval 48–467 is disordered; that stretch reads EIQEKGFPKH…ELENRTQQEK (420 aa). Residues 49 to 75 show a composition bias toward basic and acidic residues; sequence IQEKGFPKHEEKRPNPVKDLPDQKCEH. Composition is skewed to low complexity over residues 76–95 and 105–177; these read QQQP…QQEL and QQLP…VPQE. 2 stretches are compositionally biased toward basic and acidic residues: residues 178–192 and 220–231; these read LHLR…DPEL and RHQEPQEQELHL. Positions 278–290 are enriched in low complexity; it reads QQQQESPEPELQL. Composition is skewed to basic and acidic residues over residues 295–318, 348–373, 380–391, 415–437, and 450–467; these read QSHE…ELYL, LEEK…HEPD, EKQKLGEPELHL, KQEK…KELS, and KQLE…QQEK.

Belongs to the involucrin family. As to quaternary structure, directly or indirectly cross-linked to cornifelin (CNFN). In terms of processing, substrate of transglutaminase. Specific glutamines or lysines are cross-linked to keratins, desmoplakin and to inter involucrin molecules. As to expression, keratinocytes of epidermis and other stratified squamous epithelia.

The protein resides in the cytoplasm. In terms of biological role, part of the insoluble cornified cell envelope (CE) of stratified squamous epithelia. The chain is Involucrin (Ivl) from Mus musculus (Mouse).